The sequence spans 382 residues: MVQAQAAAKEAAAAAIPLMAPYKMGRFELSHRVVLAPLTRCRSYDHVPQPHAALYYSQRATNGGLLISEATGVSATGEGYPEIPGVWTRQQVKAWKPIVDAVHRKGALFFCQLAHVGRASTNDQQPNGQAPISSTDKQITPDDSHTVYSKPRRLRTDEIPHVVDDFRVAARNAIEAGFDGVEIHGAHGYLIDQFMKDSANGRTDQYGGSLENRCRFAVEVIDAVVAEVGADRVGIRLSPYIDFMDCFDSNPEALGSYMVRQLNKHPELLYCHMVEPRMATVEGRRKINHGLLPFRKQFNGTFIASGGYDREEGNKVVDDGYADLVAYGRLFLANPDLPRRFELNAPLNKYDGSTFYTHDPVVGYTDYPFLEEKKEDSATVIV.

FMN contacts are provided by residues P37–T39, A70, and Q112. The span at S120–Q138 shows a compositional bias: polar residues. Residues S120–V147 form a disordered region. H184 to H187 provides a ligand contact to substrate. Y189 acts as the Proton donor in catalysis. An FMN-binding site is contributed by R236. R277 serves as a coordination point for substrate. Residues G307 and G328–R329 contribute to the FMN site.

It belongs to the NADH:flavin oxidoreductase/NADH oxidase family. It depends on FMN as a cofactor.

Its function is as follows. Putative oxophytodienoate reductase that may be involved in the biosynthesis or metabolism of oxylipin signaling molecules. The chain is Putative 12-oxophytodienoate reductase 3 (OPR3) from Oryza sativa subsp. japonica (Rice).